Consider the following 502-residue polypeptide: Bone morphogenetic protein receptor type-1B (502 aa).

A signal peptide spans methionine 1–threonine 13. The interval methionine 1–proline 25 is disordered. The Extracellular portion of the chain corresponds to lysine 14 to arginine 126. Disulfide bonds link cysteine 32–cysteine 53, cysteine 34–cysteine 38, cysteine 47–cysteine 71, cysteine 81–cysteine 95, and cysteine 96–cysteine 102. The helical transmembrane segment at alanine 127–phenylalanine 148 threads the bilayer. Residues arginine 149–leucine 502 lie on the Cytoplasmic side of the membrane. Positions glutamate 174–glutamine 203 constitute a GS domain. The region spanning isoleucine 204–methionine 494 is the Protein kinase domain. ATP-binding positions include isoleucine 210–valine 218 and lysine 231. Aspartate 332 functions as the Proton acceptor in the catalytic mechanism.

This sequence belongs to the protein kinase superfamily. TKL Ser/Thr protein kinase family. TGFB receptor subfamily. As to quaternary structure, interacts with high affinity with GDF5; positively regulates chondrocyte differentiation. Interacts with SCUBE3. Interacts with TSC22D1/TSC-22. Interacts with TGFBR3. It depends on Mg(2+) as a cofactor. Requires Mn(2+) as cofactor. Autophosphorylated.

It localises to the cell membrane. The catalysed reaction is L-threonyl-[receptor-protein] + ATP = O-phospho-L-threonyl-[receptor-protein] + ADP + H(+). It carries out the reaction L-seryl-[receptor-protein] + ATP = O-phospho-L-seryl-[receptor-protein] + ADP + H(+). On ligand binding, forms a receptor complex consisting of two type II and two type I transmembrane serine/threonine kinases. Type II receptors phosphorylate and activate type I receptors which autophosphorylate, then bind and activate SMAD transcriptional regulators. Receptor for BMP7/OP-1 and GDF5. Positively regulates chondrocyte differentiation through GDF5 interaction. The chain is Bone morphogenetic protein receptor type-1B (BMPR1B) from Homo sapiens (Human).